Reading from the N-terminus, the 273-residue chain is 4-hydroxy-tetrahydrodipicolinate reductase (273 aa).

Residues 12 to 17 and Glu38 contribute to the NAD(+) site; that span reads GAGGRM. Arg39 provides a ligand contact to NADP(+). Residues 102–104 and 126–129 each bind NAD(+); these read GTT and AANF. His159 functions as the Proton donor/acceptor in the catalytic mechanism. His160 is a binding site for (S)-2,3,4,5-tetrahydrodipicolinate. Lys163 functions as the Proton donor in the catalytic mechanism. 169–170 contributes to the (S)-2,3,4,5-tetrahydrodipicolinate binding site; it reads GT.

The protein belongs to the DapB family. Homotetramer.

It localises to the cytoplasm. It carries out the reaction (S)-2,3,4,5-tetrahydrodipicolinate + NAD(+) + H2O = (2S,4S)-4-hydroxy-2,3,4,5-tetrahydrodipicolinate + NADH + H(+). It catalyses the reaction (S)-2,3,4,5-tetrahydrodipicolinate + NADP(+) + H2O = (2S,4S)-4-hydroxy-2,3,4,5-tetrahydrodipicolinate + NADPH + H(+). It functions in the pathway amino-acid biosynthesis; L-lysine biosynthesis via DAP pathway; (S)-tetrahydrodipicolinate from L-aspartate: step 4/4. In terms of biological role, catalyzes the conversion of 4-hydroxy-tetrahydrodipicolinate (HTPA) to tetrahydrodipicolinate. The protein is 4-hydroxy-tetrahydrodipicolinate reductase of Salmonella enteritidis PT4 (strain P125109).